A 303-amino-acid polypeptide reads, in one-letter code: Crk-like protein (303 aa).

An SH2 domain is found at 14–102 (WYMGPVSRQE…LDTTTLIEPA (89 aa)). The region spanning 123–183 (ENLEYVRTLY…PVPYVEKLVR (61 aa)) is the SH3 1 domain. Y127 carries the phosphotyrosine modification. Residues 184 to 204 (SSPHGKHGNRNSNSYGIPEPA) are disordered. Y207 carries the phosphotyrosine modification. The SH3 2 domain maps to 235 to 296 (NGPVFAKAIQ…PFTHVKIFDP (62 aa)).

It belongs to the CRK family. In terms of assembly, interacts with INPP5D/SHIP1. Interacts with DOCK2 and EPOR. Interacts with phosphorylated CBLB and IRS4. Interacts with BCAR1/CAS and NEDD9/HEF1.

Its function is as follows. May mediate the transduction of intracellular signals. The sequence is that of Crk-like protein from Rattus norvegicus (Rat).